The sequence spans 156 residues: ATP synthase subunit b (156 aa).

The helical transmembrane segment at 7–26 (LIGQLIAFALFVAFCMKYVW) threads the bilayer.

The protein belongs to the ATPase B chain family. As to quaternary structure, F-type ATPases have 2 components, F(1) - the catalytic core - and F(0) - the membrane proton channel. F(1) has five subunits: alpha(3), beta(3), gamma(1), delta(1), epsilon(1). F(0) has three main subunits: a(1), b(2) and c(10-14). The alpha and beta chains form an alternating ring which encloses part of the gamma chain. F(1) is attached to F(0) by a central stalk formed by the gamma and epsilon chains, while a peripheral stalk is formed by the delta and b chains.

It is found in the cell inner membrane. F(1)F(0) ATP synthase produces ATP from ADP in the presence of a proton or sodium gradient. F-type ATPases consist of two structural domains, F(1) containing the extramembraneous catalytic core and F(0) containing the membrane proton channel, linked together by a central stalk and a peripheral stalk. During catalysis, ATP synthesis in the catalytic domain of F(1) is coupled via a rotary mechanism of the central stalk subunits to proton translocation. In terms of biological role, component of the F(0) channel, it forms part of the peripheral stalk, linking F(1) to F(0). The polypeptide is ATP synthase subunit b (Haemophilus ducreyi (strain 35000HP / ATCC 700724)).